A 269-amino-acid polypeptide reads, in one-letter code: UPF0761 membrane protein NTHI0384 (269 aa).

6 helical membrane passes run methionine 32–phenylalanine 52, methionine 89–aspartate 109, phenylalanine 128–isoleucine 148, leucine 168–valine 188, phenylalanine 203–phenylalanine 223, and alanine 232–valine 252.

This sequence belongs to the UPF0761 family.

The protein localises to the cell inner membrane. The chain is UPF0761 membrane protein NTHI0384 from Haemophilus influenzae (strain 86-028NP).